A 120-amino-acid chain; its full sequence is Large ribosomal subunit protein uL18 (120 aa).

It belongs to the universal ribosomal protein uL18 family. In terms of assembly, part of the 50S ribosomal subunit; part of the 5S rRNA/L5/L18/L25 subcomplex. Contacts the 5S and 23S rRNAs.

Functionally, this is one of the proteins that bind and probably mediate the attachment of the 5S RNA into the large ribosomal subunit, where it forms part of the central protuberance. The chain is Large ribosomal subunit protein uL18 from Gluconacetobacter diazotrophicus (strain ATCC 49037 / DSM 5601 / CCUG 37298 / CIP 103539 / LMG 7603 / PAl5).